The following is a 32-amino-acid chain: Dermaseptin-DA4 (32 aa).

As to expression, expressed by the skin glands.

It is found in the secreted. The protein localises to the target cell membrane. Antimicrobial peptide with activity against Gram-negative bacteria, but not against Gram-positive bacteria. Active against E.coli (MIC=5 uM), and P.aeruginosa (MIC=40 uM). Acts by disrupting cell membranes. Is able to depolarize membranes of Gram-positive and Gram-negative bacteria. Also acts as a potent chemoattractant for human leukocytes and activates them mainly through a GPCR, possibly FPRL1 coupled to the ERK1/2 MAPK pathway. Is unstructured in water but become helical upon binding to anionic lipids. In contrast to most dermaseptins, is not structured in the presence of zwitterionic lipids. Does not show hemolytic activity. The protein is Dermaseptin-DA4 of Agalychnis dacnicolor (Giant Mexican leaf frog).